The following is a 206-amino-acid chain: ATP-dependent Clp protease proteolytic subunit 1 (206 aa).

Serine 106 functions as the Nucleophile in the catalytic mechanism. Residue histidine 131 is part of the active site.

Belongs to the peptidase S14 family. Fourteen ClpP subunits assemble into 2 heptameric rings which stack back to back to give a disk-like structure with a central cavity, resembling the structure of eukaryotic proteasomes.

The protein resides in the cytoplasm. The enzyme catalyses Hydrolysis of proteins to small peptides in the presence of ATP and magnesium. alpha-casein is the usual test substrate. In the absence of ATP, only oligopeptides shorter than five residues are hydrolyzed (such as succinyl-Leu-Tyr-|-NHMec, and Leu-Tyr-Leu-|-Tyr-Trp, in which cleavage of the -Tyr-|-Leu- and -Tyr-|-Trp bonds also occurs).. Functionally, cleaves peptides in various proteins in a process that requires ATP hydrolysis. Has a chymotrypsin-like activity. Plays a major role in the degradation of misfolded proteins. This is ATP-dependent Clp protease proteolytic subunit 1 from Methylococcus capsulatus (strain ATCC 33009 / NCIMB 11132 / Bath).